The primary structure comprises 409 residues: NADH-quinone oxidoreductase subunit D (409 aa).

The protein belongs to the complex I 49 kDa subunit family. As to quaternary structure, NDH-1 is composed of 14 different subunits. Subunits NuoB, C, D, E, F, and G constitute the peripheral sector of the complex.

It localises to the cell inner membrane. The enzyme catalyses a quinone + NADH + 5 H(+)(in) = a quinol + NAD(+) + 4 H(+)(out). Its function is as follows. NDH-1 shuttles electrons from NADH, via FMN and iron-sulfur (Fe-S) centers, to quinones in the respiratory chain. The immediate electron acceptor for the enzyme in this species is believed to be ubiquinone. Couples the redox reaction to proton translocation (for every two electrons transferred, four hydrogen ions are translocated across the cytoplasmic membrane), and thus conserves the redox energy in a proton gradient. In Helicobacter hepaticus (strain ATCC 51449 / 3B1), this protein is NADH-quinone oxidoreductase subunit D.